The following is an 803-amino-acid chain: Xylosyltransferase sqv-6 (803 aa).

The Cytoplasmic portion of the chain corresponds to 3-13; it reads VVGGVNTNYRH. A helical; Signal-anchor for type II membrane protein transmembrane segment spans residues 14-34; it reads YALVIVLFFFLNVYLLYSAQN. Over 35–803 the chain is Lumenal; sequence SVQIRKDEGE…GWDEEARILR (769 aa). An intrachain disulfide couples C63 to C91. N-linked (GlcNAc...) asparagine glycans are attached at residues N95, N175, and N224. 3 disulfides stabilise this stretch: C107–C446, C465–C479, and C467–C477. A WSC domain is found at 115 to 209; that stretch reads IDQRIGCFLD…FNAVEIFRTD (95 aa). UDP-alpha-D-xylose-binding positions include D265 and 294–296; that span reads TIW. N326 is a glycosylation site (N-linked (GlcNAc...) asparagine). Residue 399 to 400 coordinates UDP-alpha-D-xylose; the sequence is DW. UDP-alpha-D-xylose-binding positions include S480 and 506 to 507; that span reads RK. N-linked (GlcNAc...) asparagine glycans are attached at residues N615 and N718. A disulfide bridge links C769 with C775.

The protein belongs to the glycosyltransferase 14 family. XylT subfamily. The cofactor is a divalent metal cation.

The protein resides in the endoplasmic reticulum membrane. The protein localises to the golgi apparatus membrane. It carries out the reaction UDP-alpha-D-xylose + L-seryl-[protein] = 3-O-(beta-D-xylosyl)-L-seryl-[protein] + UDP + H(+). It participates in glycan metabolism; chondroitin sulfate biosynthesis. The protein operates within glycan metabolism; heparan sulfate biosynthesis. In terms of biological role, catalyzes the first step in biosynthesis of glycosaminoglycan. Transfers D-xylose from UDP-D-xylose to specific serine residues of the core protein. In Caenorhabditis briggsae, this protein is Xylosyltransferase sqv-6.